A 282-amino-acid polypeptide reads, in one-letter code: Undecaprenyl-diphosphatase (282 aa).

The next 7 membrane-spanning stretches (helical) occupy residues 40–60, 85–105, 115–135, 153–173, 193–213, 230–250, and 258–278; these read GAAF…MYFW, ARMG…GLLF, SLYW…LAEW, IGWK…IPGS, AARF…IFQL, LAAA…FLLS, and TIFI…LSTG.

The protein belongs to the UppP family.

The protein resides in the cell inner membrane. It carries out the reaction di-trans,octa-cis-undecaprenyl diphosphate + H2O = di-trans,octa-cis-undecaprenyl phosphate + phosphate + H(+). Catalyzes the dephosphorylation of undecaprenyl diphosphate (UPP). Confers resistance to bacitracin. The polypeptide is Undecaprenyl-diphosphatase (Chlorobium phaeovibrioides (strain DSM 265 / 1930) (Prosthecochloris vibrioformis (strain DSM 265))).